Reading from the N-terminus, the 118-residue chain is MAKLSRNQARKAKNLKIRTKITGTAERPRLSVFRSHMNFSAQLIDDSKSITIVGITTAKKGSKEYHGNIKSAHELGLKFAKMIKEKNVSKIVFDRSGYLYHGRVKAFAEALRSEGIEF.

This sequence belongs to the universal ribosomal protein uL18 family. Part of the 50S ribosomal subunit; part of the 5S rRNA/L5/L18/L25 subcomplex. Contacts the 5S and 23S rRNAs.

Its function is as follows. This is one of the proteins that bind and probably mediate the attachment of the 5S RNA into the large ribosomal subunit, where it forms part of the central protuberance. This is Large ribosomal subunit protein uL18 from Mycoplasmopsis pulmonis (strain UAB CTIP) (Mycoplasma pulmonis).